The sequence spans 335 residues: Glycerol-3-phosphate dehydrogenase [NAD(P)+] (335 aa).

Residues serine 10, phenylalanine 11, arginine 31, and lysine 105 each coordinate NADPH. Sn-glycerol 3-phosphate-binding residues include lysine 105, glycine 136, and serine 138. Alanine 140 lines the NADPH pocket. 5 residues coordinate sn-glycerol 3-phosphate: lysine 191, aspartate 244, serine 254, arginine 255, and asparagine 256. The active-site Proton acceptor is lysine 191. Arginine 255 serves as a coordination point for NADPH. NADPH is bound by residues valine 279 and glutamate 281.

Belongs to the NAD-dependent glycerol-3-phosphate dehydrogenase family.

The protein localises to the cytoplasm. It catalyses the reaction sn-glycerol 3-phosphate + NAD(+) = dihydroxyacetone phosphate + NADH + H(+). It carries out the reaction sn-glycerol 3-phosphate + NADP(+) = dihydroxyacetone phosphate + NADPH + H(+). It functions in the pathway membrane lipid metabolism; glycerophospholipid metabolism. Catalyzes the reduction of the glycolytic intermediate dihydroxyacetone phosphate (DHAP) to sn-glycerol 3-phosphate (G3P), the key precursor for phospholipid synthesis. This Myxococcus xanthus (strain DK1622) protein is Glycerol-3-phosphate dehydrogenase [NAD(P)+].